The following is a 430-amino-acid chain: Tol-Pal system protein TolB (430 aa).

Residues 1-21 form the signal peptide; sequence MKQAFRVALSVLMLFVAVAHA.

Belongs to the TolB family. In terms of assembly, the Tol-Pal system is composed of five core proteins: the inner membrane proteins TolA, TolQ and TolR, the periplasmic protein TolB and the outer membrane protein Pal. They form a network linking the inner and outer membranes and the peptidoglycan layer.

It is found in the periplasm. Functionally, part of the Tol-Pal system, which plays a role in outer membrane invagination during cell division and is important for maintaining outer membrane integrity. TolB occupies a key intermediary position in the Tol-Pal system because it communicates directly with both membrane-embedded components, Pal in the outer membrane and TolA in the inner membrane. The polypeptide is Tol-Pal system protein TolB (Erwinia tasmaniensis (strain DSM 17950 / CFBP 7177 / CIP 109463 / NCPPB 4357 / Et1/99)).